We begin with the raw amino-acid sequence, 155 residues long: Small ribosomal subunit protein uS7cz/uS7cy (155 aa).

It belongs to the universal ribosomal protein uS7 family. Part of the 30S ribosomal subunit.

It is found in the plastid. Its subcellular location is the chloroplast. In terms of biological role, one of the primary rRNA binding proteins, it binds directly to 16S rRNA where it nucleates assembly of the head domain of the 30S subunit. In Lotus japonicus (Lotus corniculatus var. japonicus), this protein is Small ribosomal subunit protein uS7cz/uS7cy (rps7-A).